Consider the following 439-residue polypeptide: Chromosomal replication initiator protein DnaA (439 aa).

Residues 1-75 form a domain I, interacts with DnaA modulators region; it reads MESWSRCLER…GIREVVLAIG (75 aa). The interval 75 to 101 is domain II; that stretch reads GSRPKTTELPVPVDTTGRLSSTVPFNG. Residues 102-319 are domain III, AAA+ region; sequence NLDTHYNFDN…GALNTLVARA (218 aa). Residues Gly-147, Gly-149, Lys-150, and Thr-151 each coordinate ATP. A domain IV, binds dsDNA region spans residues 320–439; it reads NFTGRAVTIE…WDKLMRKFSE (120 aa).

It belongs to the DnaA family. As to quaternary structure, oligomerizes as a right-handed, spiral filament on DNA at oriC.

The protein resides in the cytoplasm. Plays an essential role in the initiation and regulation of chromosomal replication. ATP-DnaA binds to the origin of replication (oriC) to initiate formation of the DNA replication initiation complex once per cell cycle. Binds the DnaA box (a 9 base pair repeat at the origin) and separates the double-stranded (ds)DNA. Forms a right-handed helical filament on oriC DNA; dsDNA binds to the exterior of the filament while single-stranded (ss)DNA is stabiized in the filament's interior. The ATP-DnaA-oriC complex binds and stabilizes one strand of the AT-rich DNA unwinding element (DUE), permitting loading of DNA polymerase. After initiation quickly degrades to an ADP-DnaA complex that is not apt for DNA replication. Binds acidic phospholipids. This is Chromosomal replication initiator protein DnaA from Xylella fastidiosa (strain 9a5c).